Consider the following 467-residue polypeptide: MAP kinase-interacting serine/threonine-protein kinase 2 (467 aa).

Residues 83-367 (QLQQEILGEG…AAQVLQHPWV (285 aa)) form the Protein kinase domain. ATP-binding positions include 89 to 97 (LGEGAYAKV) and Lys112. Asp204 acts as the Proton acceptor in catalysis. Zn(2+) is bound by residues Cys298, Cys310, and Cys313. The disordered stretch occupies residues 432–467 (MQLSPPSESKLAKRRQQGSKGGISPPSLAPLLIVSD).

Belongs to the protein kinase superfamily. CAMK Ser/Thr protein kinase family. It depends on Mg(2+) as a cofactor. Zn(2+) serves as cofactor.

It carries out the reaction L-seryl-[protein] + ATP = O-phospho-L-seryl-[protein] + ADP + H(+). The catalysed reaction is L-threonyl-[protein] + ATP = O-phospho-L-threonyl-[protein] + ADP + H(+). In terms of biological role, may play a role in the response to environmental stress and cytokines. Appears to regulate translation by phosphorylating EIF4E, thus increasing the affinity of this protein for the 7-methylguanosine-containing mRNA cap. This Xenopus laevis (African clawed frog) protein is MAP kinase-interacting serine/threonine-protein kinase 2 (mknk2).